The following is a 609-amino-acid chain: Elongation factor 4 (609 aa).

The 183-residue stretch at 11–193 (SRIRNFSIIA…QIVEKVPAPS (183 aa)) folds into the tr-type G domain. Residues 23 to 28 (DHGKST) and 140 to 143 (NKID) contribute to the GTP site.

It belongs to the TRAFAC class translation factor GTPase superfamily. Classic translation factor GTPase family. LepA subfamily.

The protein localises to the cell membrane. It catalyses the reaction GTP + H2O = GDP + phosphate + H(+). In terms of biological role, required for accurate and efficient protein synthesis under certain stress conditions. May act as a fidelity factor of the translation reaction, by catalyzing a one-codon backward translocation of tRNAs on improperly translocated ribosomes. Back-translocation proceeds from a post-translocation (POST) complex to a pre-translocation (PRE) complex, thus giving elongation factor G a second chance to translocate the tRNAs correctly. Binds to ribosomes in a GTP-dependent manner. In Halalkalibacterium halodurans (strain ATCC BAA-125 / DSM 18197 / FERM 7344 / JCM 9153 / C-125) (Bacillus halodurans), this protein is Elongation factor 4.